The following is a 234-amino-acid chain: Multicopy suppressor of SEC21 protein 28 (234 aa).

Over 1–47 (MQTPPESTDVKLDTLNEPSAHLIEKNVALPKDIFRSYLSYWIYEIAR) the chain is Cytoplasmic. Residue T3 is modified to Phosphothreonine. A helical membrane pass occupies residues 48-68 (YTPVMILSLVIGVLVLLIIFF). Over 69-72 (NDNE) the chain is Extracellular. A helical membrane pass occupies residues 73–93 (ACVFNSAIFAFTSLVGLLIIL). The Cytoplasmic segment spans residues 94 to 234 (SDGNPKLVSR…NIDALLKKTE (141 aa)). Residues 231-234 (KKTE) form a COPI binding region.

It belongs to the DUP/COS family. In terms of assembly, interacts with MST27. Binds to coatomer proteins of COPI and SEC23/SEC24 of COPII coated vesicles.

Its subcellular location is the endoplasmic reticulum. The protein resides in the golgi apparatus. The protein localises to the cytoplasmic vesicle. It is found in the COPI-coated vesicle membrane. It localises to the COPII-coated vesicle membrane. In terms of biological role, involved in protein trafficking vesicle formation, probably by stabilizing of coatomer at the Golgi membrane and thus allowing the efficient formation of COPI coated vesicles. The protein is Multicopy suppressor of SEC21 protein 28 (MST28) of Saccharomyces cerevisiae (strain ATCC 204508 / S288c) (Baker's yeast).